Consider the following 68-residue polypeptide: Large ribosomal subunit protein bL33c (68 aa).

It belongs to the bacterial ribosomal protein bL33 family.

It localises to the plastid. Its subcellular location is the chloroplast. The chain is Large ribosomal subunit protein bL33c from Lactuca sativa (Garden lettuce).